Here is a 118-residue protein sequence, read N- to C-terminus: Small ribosomal subunit protein uS13 (118 aa).

The tract at residues 91 to 118 (HRRGLPVRGQRTKTNARTRKGPRKPIKK) is disordered.

Belongs to the universal ribosomal protein uS13 family. As to quaternary structure, part of the 30S ribosomal subunit. Forms a loose heterodimer with protein S19. Forms two bridges to the 50S subunit in the 70S ribosome.

Located at the top of the head of the 30S subunit, it contacts several helices of the 16S rRNA. In the 70S ribosome it contacts the 23S rRNA (bridge B1a) and protein L5 of the 50S subunit (bridge B1b), connecting the 2 subunits; these bridges are implicated in subunit movement. Contacts the tRNAs in the A and P-sites. This is Small ribosomal subunit protein uS13 from Serratia proteamaculans (strain 568).